Here is a 187-residue protein sequence, read N- to C-terminus: UPF0301 protein Sala_0165 (187 aa).

Belongs to the UPF0301 (AlgH) family.

The chain is UPF0301 protein Sala_0165 from Sphingopyxis alaskensis (strain DSM 13593 / LMG 18877 / RB2256) (Sphingomonas alaskensis).